A 225-amino-acid chain; its full sequence is NAD(P)H-quinone oxidoreductase subunit K, chloroplastic (225 aa).

Positions 43, 44, 108, and 139 each coordinate [4Fe-4S] cluster.

Belongs to the complex I 20 kDa subunit family. As to quaternary structure, NDH is composed of at least 16 different subunits, 5 of which are encoded in the nucleus. The cofactor is [4Fe-4S] cluster.

It localises to the plastid. Its subcellular location is the chloroplast thylakoid membrane. It carries out the reaction a plastoquinone + NADH + (n+1) H(+)(in) = a plastoquinol + NAD(+) + n H(+)(out). It catalyses the reaction a plastoquinone + NADPH + (n+1) H(+)(in) = a plastoquinol + NADP(+) + n H(+)(out). In terms of biological role, NDH shuttles electrons from NAD(P)H:plastoquinone, via FMN and iron-sulfur (Fe-S) centers, to quinones in the photosynthetic chain and possibly in a chloroplast respiratory chain. The immediate electron acceptor for the enzyme in this species is believed to be plastoquinone. Couples the redox reaction to proton translocation, and thus conserves the redox energy in a proton gradient. The chain is NAD(P)H-quinone oxidoreductase subunit K, chloroplastic from Daucus carota (Wild carrot).